Reading from the N-terminus, the 487-residue chain is RCC1 repeat-containing protein DDB_G0284033 (487 aa).

RCC1 repeat units lie at residues 66-127 (SNKV…FSGY), 207-259 (RSLI…ALSN), 260-313 (DGKL…ALTS), 373-426 (NGNI…IVET), and 428-483 (DGRF…SLNS).

The polypeptide is RCC1 repeat-containing protein DDB_G0284033 (Dictyostelium discoideum (Social amoeba)).